Reading from the N-terminus, the 148-residue chain is Calmodulin-4 (148 aa).

EF-hand domains follow at residues 8–43 (EEVA…LGKN), 44–79 (LPEK…YKKG), 80–115 (HRAG…LGES), and 116–148 (LSQE…HVEN). Asp21, Asn23, Asp25, His27, Glu32, Asp57, Asp59, Asp61, Lys63, Glu68, Asp93, Asn95, Asp97, Tyr99, and Glu104 together coordinate Ca(2+).

In terms of biological role, implicated in the early stage of ectopic ossification. This chain is Calmodulin-4 (Calm4), found in Mus musculus (Mouse).